A 452-amino-acid polypeptide reads, in one-letter code: Probable glycine dehydrogenase (decarboxylating) subunit 1 (452 aa).

Belongs to the GcvP family. N-terminal subunit subfamily. The glycine cleavage system is composed of four proteins: P, T, L and H. In this organism, the P 'protein' is a heterodimer of two subunits.

It catalyses the reaction N(6)-[(R)-lipoyl]-L-lysyl-[glycine-cleavage complex H protein] + glycine + H(+) = N(6)-[(R)-S(8)-aminomethyldihydrolipoyl]-L-lysyl-[glycine-cleavage complex H protein] + CO2. Its function is as follows. The glycine cleavage system catalyzes the degradation of glycine. The P protein binds the alpha-amino group of glycine through its pyridoxal phosphate cofactor; CO(2) is released and the remaining methylamine moiety is then transferred to the lipoamide cofactor of the H protein. The chain is Probable glycine dehydrogenase (decarboxylating) subunit 1 from Sphingopyxis alaskensis (strain DSM 13593 / LMG 18877 / RB2256) (Sphingomonas alaskensis).